Reading from the N-terminus, the 220-residue chain is Fibroblast growth factor 3 (220 aa).

A signal peptide spans 1-19 (MLVIWLLLLALLPEPRVPA). The segment at 19-40 (AATASPRAPRDAGGRGGVYEHL) is disordered. An N-linked (GlcNAc...) asparagine glycan is attached at Asn-66.

The protein belongs to the heparin-binding growth factors family.

The protein localises to the secreted. Functionally, plays an important role in the regulation of embryonic development, cell proliferation, and cell differentiation. This is Fibroblast growth factor 3 (FGF3) from Gallus gallus (Chicken).